Reading from the N-terminus, the 262-residue chain is Sperm microtubule inner protein 6 (262 aa).

This sequence belongs to the SPMIP6 family. In terms of assembly, microtubule inner protein component of sperm flagellar doublet microtubules. Interacts with alpha-tubulin. In terms of tissue distribution, expressed in testis. Strongly expressed in ciliated epithelial cells with lower levels in goblet cells (at protein level).

The protein resides in the cytoplasm. Its subcellular location is the cytoskeleton. It is found in the nucleus. The protein localises to the mitochondrion. It localises to the flagellum axoneme. In terms of biological role, may participate in intramanchette transport and midpiece formation of the sperm tail. May play a potential role in somatic cell proliferation. The polypeptide is Sperm microtubule inner protein 6 (Homo sapiens (Human)).